The following is a 140-amino-acid chain: Large ribosomal subunit protein uL16c (140 aa).

Belongs to the universal ribosomal protein uL16 family. As to quaternary structure, part of the 50S ribosomal subunit.

It localises to the plastid. The protein resides in the chloroplast. The polypeptide is Large ribosomal subunit protein uL16c (Cyanidium caldarium (Red alga)).